The following is a 186-amino-acid chain: MIEIPSDFSEQTAKFTQILAKFNRVHSLTNYKNFDEQISDSISPLKWLKFYPETAIDVGSGAGFPAIFLAMILKDCRWWLFEPNAKKSSFLSYVKAELNLKNVSVKSCKIEACEPFVAQLITSRALMKTKELLKICRGFYDNETQILLYKGSSVEGELDGLDAQIYGVKNRNYVFLNVKRDWKENE.

S-adenosyl-L-methionine contacts are provided by residues Gly59, Phe64, 110 to 111, and Arg124; that span reads IE.

The protein belongs to the methyltransferase superfamily. RNA methyltransferase RsmG family.

Its subcellular location is the cytoplasm. It catalyses the reaction guanosine(527) in 16S rRNA + S-adenosyl-L-methionine = N(7)-methylguanosine(527) in 16S rRNA + S-adenosyl-L-homocysteine. In terms of biological role, specifically methylates the N7 position of guanine in position 527 of 16S rRNA. In Campylobacter curvus (strain 525.92), this protein is Ribosomal RNA small subunit methyltransferase G.